A 307-amino-acid polypeptide reads, in one-letter code: Dioxygenase cdmD (307 aa).

Residues histidine 146, aspartate 148, and histidine 226 each contribute to the Fe cation site.

It belongs to the PhyH family. Homodimer. Fe cation is required as a cofactor.

It catalyses the reaction verruculide A + 2-oxoglutarate + O2 = chrodrimanin T + succinate + CO2. The enzyme catalyses chrodrimanin E + 2-oxoglutarate + O2 = chrodrimanin A + succinate + CO2. It participates in secondary metabolite biosynthesis; terpenoid biosynthesis. Functionally, dioxygenase; part of the gene cluster that mediates the biosynthesis of chrodrimanin B, a meroterpenoid that acts as a potent blocker of insect GABA-gated chloride channels. The first step of the pathway is the biosynthesis of 6-hydroxymellein by the polyketide synthase cdmE. The prenyltransferase cdmH acts as a 6-hydroxymellein 5-farnesyltransferase and produces the hydrophobic metabolite verruculide C. The FAD-dependent monooxygenase cdmI further converts verruculide C into verruculide B. The terpene cyclase cdmG then produced the pentacyclic molecule 3-hydroxypentacecilide A, the backbone structure of chrodrimanin B, via folding the farnesyl moiety of the substrate into the chair-boat conformation. The short-chain dehydrogenase/reductase cdmF functions as the 3-OH dehydrogenase that oxidizes the C-3 hydroxyl group of 3-hydroxypentacecilide A and produces chrodrimanin C, the dehydrogenated product of 3-hydroxypentacecilide A. The cytochrome P450 monooxygenase cdmJ then accepts both 3-hydroxypentacecilide A and chrodrimanin C and functions as a C-7-beta-hydroxylase to produce respectively chrodrimanin H and chrodrimanin F. The dioxygenase cdmA accepts chrodrimanin H to afford chrodrimanin E, which is further transformed to chrodrimanin A by the dioxygenase cdmD. CdmA can also accept chrodrimanin C as substrate to convert it into verruculide A, which is further converted into chrodrimanin T by cdmD. The last step of the biosynthesis is proposed to be performed by the acetyltransferase cdmC which acetylates chrodrimanin A to yield chrodrimanin B. The pathway may also lead to the production of additional shunt products, including chrodrimanins T and U. This is Dioxygenase cdmD from Talaromyces verruculosus (Penicillium verruculosum).